Consider the following 335-residue polypeptide: Glyceraldehyde-3-phosphate dehydrogenase (335 aa).

NAD(+) is bound by residues 12 to 13, D34, and K79; that span reads RI. D-glyceraldehyde 3-phosphate is bound by residues 150 to 152, T181, 210 to 211, and R233; these read SCT and TG. The Nucleophile role is filled by C151. An NAD(+)-binding site is contributed by N315.

Belongs to the glyceraldehyde-3-phosphate dehydrogenase family. In terms of assembly, homotetramer.

It is found in the cytoplasm. The enzyme catalyses D-glyceraldehyde 3-phosphate + phosphate + NAD(+) = (2R)-3-phospho-glyceroyl phosphate + NADH + H(+). It functions in the pathway carbohydrate degradation; glycolysis; pyruvate from D-glyceraldehyde 3-phosphate: step 1/5. The protein is Glyceraldehyde-3-phosphate dehydrogenase (GPD) of Debaryomyces hansenii (strain ATCC 36239 / CBS 767 / BCRC 21394 / JCM 1990 / NBRC 0083 / IGC 2968) (Yeast).